The sequence spans 560 residues: NADH-quinone oxidoreductase subunit C/D (560 aa).

The NADH dehydrogenase I subunit C stretch occupies residues Asn2–Leu157. The tract at residues Lys175–Arg560 is NADH dehydrogenase I subunit D.

It in the N-terminal section; belongs to the complex I 30 kDa subunit family. In the C-terminal section; belongs to the complex I 49 kDa subunit family. NDH-1 is composed of 13 different subunits. Subunits NuoB, CD, E, F, and G constitute the peripheral sector of the complex.

It localises to the cytoplasm. The protein localises to the cell inner membrane. It carries out the reaction a quinone + NADH + 5 H(+)(in) = a quinol + NAD(+) + 4 H(+)(out). Functionally, NDH-1 shuttles electrons from NADH, via FMN and iron-sulfur (Fe-S) centers, to quinones in the respiratory chain. The immediate electron acceptor for the enzyme in this species is believed to be ubiquinone. Couples the redox reaction to proton translocation (for every two electrons transferred, four hydrogen ions are translocated across the cytoplasmic membrane), and thus conserves the redox energy in a proton gradient. This is NADH-quinone oxidoreductase subunit C/D from Bdellovibrio bacteriovorus (strain ATCC 15356 / DSM 50701 / NCIMB 9529 / HD100).